The primary structure comprises 202 residues: MSSHNLVTLVSWLAGDFSNREQAWDAPAFFSHIRLCMRPLPWQVFEGYGLYSEQADDYDWAHPYRIVVLNLVEQPDGIIECRNYALKDTAPYLGAAREAERARLHRLTPEQLEPLPGCTFLFKREGSLFRGRVRPGKGCRVFRKGRDTYLDGEATVSADYYKSIDRGRDLESDEQVWGSVSGPFHFTKQVDFAPEVLALARP.

Belongs to the CpcT/CpeT biliprotein lyase family.

Functionally, covalently attaches a chromophore to Cys residue(s) of phycobiliproteins. The chain is Chromophore lyase CpcT/CpeT 2 from Gloeobacter violaceus (strain ATCC 29082 / PCC 7421).